Here is a 219-residue protein sequence, read N- to C-terminus: uncharacterized protein (219 aa).

2 helical membrane passes run Met8–Val28 and Gly194–Phe214.

The protein resides in the cell membrane. This is an uncharacterized protein from Archaeoglobus fulgidus (strain ATCC 49558 / DSM 4304 / JCM 9628 / NBRC 100126 / VC-16).